A 206-amino-acid chain; its full sequence is Small ribosomal subunit protein uS4 (206 aa).

The S4 RNA-binding domain maps to 96–156; the sequence is GRLDNVVYRM…EKSKKQSRIK (61 aa).

The protein belongs to the universal ribosomal protein uS4 family. Part of the 30S ribosomal subunit. Contacts protein S5. The interaction surface between S4 and S5 is involved in control of translational fidelity.

In terms of biological role, one of the primary rRNA binding proteins, it binds directly to 16S rRNA where it nucleates assembly of the body of the 30S subunit. Functionally, with S5 and S12 plays an important role in translational accuracy. The sequence is that of Small ribosomal subunit protein uS4 from Photorhabdus laumondii subsp. laumondii (strain DSM 15139 / CIP 105565 / TT01) (Photorhabdus luminescens subsp. laumondii).